Consider the following 119-residue polypeptide: Ribosome-binding factor A (119 aa).

The protein belongs to the RbfA family. Monomer. Binds 30S ribosomal subunits, but not 50S ribosomal subunits or 70S ribosomes.

The protein localises to the cytoplasm. In terms of biological role, one of several proteins that assist in the late maturation steps of the functional core of the 30S ribosomal subunit. Associates with free 30S ribosomal subunits (but not with 30S subunits that are part of 70S ribosomes or polysomes). Required for efficient processing of 16S rRNA. May interact with the 5'-terminal helix region of 16S rRNA. This chain is Ribosome-binding factor A, found in Citrifermentans bemidjiense (strain ATCC BAA-1014 / DSM 16622 / JCM 12645 / Bem) (Geobacter bemidjiensis).